The following is a 61-amino-acid chain: UPF0434 protein Avin_14770 (61 aa).

It belongs to the UPF0434 family.

This is UPF0434 protein Avin_14770 from Azotobacter vinelandii (strain DJ / ATCC BAA-1303).